Reading from the N-terminus, the 202-residue chain is uncharacterized protein (202 aa).

Disordered stretches follow at residues 1–32 and 46–95; these read MRPEGVSRGRASSVSISMCPPPPNGARRASLG and PSSV…PSYT. A compositionally biased stretch (low complexity) spans 47-79; the sequence is SSVSLSSSSSRRSMPSLGSSRSSSLPSTGSLRS.

This is an uncharacterized protein from Equus caballus (Horse).